A 325-amino-acid chain; its full sequence is MSFDYTDPTFRNYPFPHYCDFDRHQHCDHDLRTNPPPTEPPSRKSKLMSTSENKGKQPLHPPPTEGFPKPPPPPSSTPTTPTPPDQTKAPEPIEKRIIHAFHAEPKTHTNGEAPPAFNPNNMNAVPLNLLNINLKYSPVTNSIANPKQTEAIGKAWVRILQIDPANVFLYAIDLARACADAGSSPEADIIGANEDLNPVVERNALAGVVRDFCPLRAFCAYYSRVVWNLMIKADQPPANWMKSGIDEGAKFAAFDFFHGVLSPASLYVPLERHPTAAERIANQAMFAVKIANAPGNGSELTMDHVAFTKGRITADSKPRPTPFNT.

The disordered stretch occupies residues D30–A89. Pro residues predominate over residues L59–P84.

This sequence belongs to the potexviruses coat protein family.

It is found in the virion. In terms of biological role, required for genome encapsidation. Forms ribonucleoprotein complexes along with TGB1 helicase and viral RNA. This is Capsid protein from Citrus (ICRSV).